The sequence spans 299 residues: Leucine zipper transcription factor-like protein 1 (299 aa).

Positions 96–299 (LKLQTDISEL…KRLAKYESED (204 aa)) form a coiled coil. The interval 145–299 (GTTELLNKEI…KRLAKYESED (155 aa)) is interaction with BSS9.

The protein belongs to the LZTFL1 family. As to quaternary structure, self-associates. Interacts with BBS9; the interaction mediates the association of LZTL1 with the BBsome complex and regulates BBSome ciliary trafficking. In terms of tissue distribution, highly expressed in testis. Expressed in brain, cerebellum, eye, heart, kidney, liver, lung and trachea. In small intestine, graded expression along the crypt-villus axis with high levels in the villus apex and lower levels in the crypt stem cells (at protein level). Not expressed in skeletal muscle and white adipose tissue.

The protein resides in the cytoplasm. Its function is as follows. Regulates ciliary localization of the BBSome complex. Together with the BBSome complex, controls SMO ciliary trafficking and contributes to the sonic hedgehog (SHH) pathway regulation. May play a role in neurite outgrowth. May have tumor suppressor function. The sequence is that of Leucine zipper transcription factor-like protein 1 (Lztfl1) from Mus musculus (Mouse).